Reading from the N-terminus, the 296-residue chain is Endonuclease 5 (296 aa).

The first 20 residues, 1–20 (MRLWIVSVLVLTHLVHGALC), serve as a signal peptide directing secretion. Tryptophan 21 and histidine 26 together coordinate a divalent metal cation. 21–26 (WGKDGH) provides a ligand contact to substrate. Cysteine 30 and cysteine 62 form a disulfide bridge. 2 residues coordinate a divalent metal cation: aspartate 66 and histidine 81. Substrate-binding positions include 66–72 (DEIKKLS), 81–84 (HYVN), and 91–96 (NYEYCR). Disulfide bonds link cysteine 90-cysteine 243, cysteine 98-cysteine 108, and cysteine 223-cysteine 230. 2 residues coordinate substrate: asparagine 115 and tyrosine 133. N-linked (GlcNAc...) asparagine glycosylation is present at asparagine 115. Residue asparagine 134 is glycosylated (N-linked (GlcNAc...) asparagine). Residues histidine 144, aspartate 148, and histidine 154 each contribute to the a divalent metal cation site. The tract at residues 144 to 193 (HYMGDVHQPLHTGFLGDLGGNTIIVNWYHNKSNLHHVWDNMIIDSALETY) is substrate binding. N-linked (GlcNAc...) asparagine glycosylation is present at asparagine 173. The a divalent metal cation site is built by histidine 178 and aspartate 182. Asparagine 195 carries an N-linked (GlcNAc...) asparagine glycan. Residues 281-296 (ATLNRIFSAKPKLAGL) constitute a propeptide, removed in mature form.

It belongs to the nuclease type I family. In terms of assembly, monomer. Zn(2+) serves as cofactor.

It catalyses the reaction Endonucleolytic cleavage to 5'-phosphomononucleotide and 5'-phosphooligonucleotide end-products.. Functionally, hydrolyzes, with low efficiency, only single-stranded DNA and RNA without apparent specificity for bases. Endonuclease that recognizes and cleaves some mismatches with high efficiency, including heteroduplex double-stranded DNA; mostly efficient on T/G, A/G and G/G mismatches, less efficient for T/T and poorly efficient for C/C, A/A, T/C and A/C. The polypeptide is Endonuclease 5 (Arabidopsis thaliana (Mouse-ear cress)).